The primary structure comprises 413 residues: Multifunctional CCA protein (413 aa).

ATP is bound by residues glycine 8 and arginine 11. CTP contacts are provided by glycine 8 and arginine 11. Residues aspartate 21 and aspartate 23 each contribute to the Mg(2+) site. Positions 91, 143, and 146 each coordinate ATP. CTP is bound by residues arginine 91, arginine 143, and arginine 146. In terms of domain architecture, HD spans 232 to 333 (TGVHVMMVVD…VRLFERSDAL (102 aa)).

The protein belongs to the tRNA nucleotidyltransferase/poly(A) polymerase family. Bacterial CCA-adding enzyme type 1 subfamily. In terms of assembly, monomer. Can also form homodimers and oligomers. It depends on Mg(2+) as a cofactor. Requires Ni(2+) as cofactor.

The enzyme catalyses a tRNA precursor + 2 CTP + ATP = a tRNA with a 3' CCA end + 3 diphosphate. The catalysed reaction is a tRNA with a 3' CCA end + 2 CTP + ATP = a tRNA with a 3' CCACCA end + 3 diphosphate. Catalyzes the addition and repair of the essential 3'-terminal CCA sequence in tRNAs without using a nucleic acid template. Adds these three nucleotides in the order of C, C, and A to the tRNA nucleotide-73, using CTP and ATP as substrates and producing inorganic pyrophosphate. tRNA 3'-terminal CCA addition is required both for tRNA processing and repair. Also involved in tRNA surveillance by mediating tandem CCA addition to generate a CCACCA at the 3' terminus of unstable tRNAs. While stable tRNAs receive only 3'-terminal CCA, unstable tRNAs are marked with CCACCA and rapidly degraded. This chain is Multifunctional CCA protein, found in Burkholderia vietnamiensis (strain G4 / LMG 22486) (Burkholderia cepacia (strain R1808)).